Here is a 139-residue protein sequence, read N- to C-terminus: Large ribosomal subunit protein uL16 (139 aa).

Basic residues predominate over residues 1–16; that stretch reads MLIPKRTKYRKQHRPV. The tract at residues 1-22 is disordered; it reads MLIPKRTKYRKQHRPVRSGMSK.

This sequence belongs to the universal ribosomal protein uL16 family. In terms of assembly, part of the 50S ribosomal subunit.

Functionally, binds 23S rRNA and is also seen to make contacts with the A and possibly P site tRNAs. The protein is Large ribosomal subunit protein uL16 of Bifidobacterium longum (strain DJO10A).